The following is a 449-amino-acid chain: SWI/SNF chromatin-remodeling accessory subunit 2 (449 aa).

The span at 1–11 (MHSQQRPNPQM) shows a compositional bias: polar residues. The tract at residues 1–56 (MHSQQRPNPQMNRHPYGTPGSAPQMRRPGGFAGQPPQMHGPRMVAPPAAPLPKKKK) is disordered. One can recognise an SWIB/MDM2 domain in the interval 223–300 (NHPAKFKLHP…PNKLHQLLQQ (78 aa)).

The protein belongs to the SMARCD family. Component of the multiprotein chromatin-remodeling complexes SWI/SNF: SWI/SNF-A (BAF), SWI/SNF-B (PBAF) and related complexes. The canonical complex contains a catalytic subunit swsn-4, core subunits swsn-1 and swsn-5, and accessory subunits swsn-3, swsn-6, phf-10, dpff-1, swsn-9 and either ham-3/swsn-2.1 or swsn-2.2.

It localises to the nucleus. The protein localises to the nucleoplasm. The protein resides in the chromosome. Its subcellular location is the nucleus envelope. Functionally, involved in transcriptional activation and repression of select genes by chromatin remodeling (alteration of DNA-nucleosome topology). Component of SWI/SNF chromatin remodeling complexes that carry out key enzymatic activities, changing chromatin structure by altering DNA-histone contacts within a nucleosome in an ATP-dependent manner. Probably regulates vulva development through the let-60/Ras pathway. Involved in nuclear reassembly after mitosis and recruitment of nuclear envelope protein, mel-28, to the nuclear periphery in the early embryo and in the adult germline. Involved in gonadogenesis. The chain is SWI/SNF chromatin-remodeling accessory subunit 2 from Caenorhabditis elegans.